Here is a 320-residue protein sequence, read N- to C-terminus: TPR repeat-containing protein MJ0263 (320 aa).

TPR repeat units follow at residues 12–45, 46–79, 80–113, 114–147, 148–181, 182–215, 216–249, 250–283, and 289–320; these read ILKD…DKDN, PLVL…EGTS, LLSL…SKPC, YLSP…YPNL, TSIL…KKDD, AHAW…NENL, VHVY…FPND, VEAK…KNVK, and KSSI…DNNI.

The protein is TPR repeat-containing protein MJ0263 of Methanocaldococcus jannaschii (strain ATCC 43067 / DSM 2661 / JAL-1 / JCM 10045 / NBRC 100440) (Methanococcus jannaschii).